A 206-amino-acid polypeptide reads, in one-letter code: Phosphoribosylglycinamide formyltransferase (206 aa).

N(1)-(5-phospho-beta-D-ribosyl)glycinamide is bound at residue 13–15 (GTN). (6R)-10-formyltetrahydrofolate-binding positions include 99-102 (MIIL) and Asn121. The active-site Proton donor is His123. Position 163 (Asp163) interacts with (6R)-10-formyltetrahydrofolate. Glu192 lines the N(1)-(5-phospho-beta-D-ribosyl)glycinamide pocket.

It belongs to the GART family.

The catalysed reaction is N(1)-(5-phospho-beta-D-ribosyl)glycinamide + (6R)-10-formyltetrahydrofolate = N(2)-formyl-N(1)-(5-phospho-beta-D-ribosyl)glycinamide + (6S)-5,6,7,8-tetrahydrofolate + H(+). Its pathway is purine metabolism; IMP biosynthesis via de novo pathway; N(2)-formyl-N(1)-(5-phospho-D-ribosyl)glycinamide from N(1)-(5-phospho-D-ribosyl)glycinamide (10-formyl THF route): step 1/1. In Dictyostelium discoideum (Social amoeba), this protein is Phosphoribosylglycinamide formyltransferase (purN).